Consider the following 223-residue polypeptide: Urease accessory protein UreF (223 aa).

Belongs to the UreF family. As to quaternary structure, ureD, UreF and UreG form a complex that acts as a GTP-hydrolysis-dependent molecular chaperone, activating the urease apoprotein by helping to assemble the nickel containing metallocenter of UreC. The UreE protein probably delivers the nickel.

The protein localises to the cytoplasm. Its function is as follows. Required for maturation of urease via the functional incorporation of the urease nickel metallocenter. The polypeptide is Urease accessory protein UreF (Rhizobium meliloti (strain 1021) (Ensifer meliloti)).